A 1362-amino-acid chain; its full sequence is Mediator of RNA polymerase II transcription subunit 12 (1362 aa).

The segment at 31 to 51 (LRPPDDIHPLVDPARIGDSVY) is disordered.

The protein belongs to the Mediator complex subunit 12 family. As to quaternary structure, component of the SRB8-11 complex, which itself associates with the Mediator complex.

The protein localises to the nucleus. Its function is as follows. Component of the SRB8-11 complex. The SRB8-11 complex is a regulatory module of the Mediator complex which is itself involved in regulation of basal and activated RNA polymerase II-dependent transcription. The SRB8-11 complex may be involved in the transcriptional repression of a subset of genes regulated by Mediator. It may inhibit the association of the Mediator complex with RNA polymerase II to form the holoenzyme complex. The protein is Mediator of RNA polymerase II transcription subunit 12 (SRB8) of Yarrowia lipolytica (strain CLIB 122 / E 150) (Yeast).